A 374-amino-acid polypeptide reads, in one-letter code: Queuine tRNA-ribosyltransferase (374 aa).

Catalysis depends on D89, which acts as the Proton acceptor. Residues 89–93 (DSGGF), D143, Q187, and G214 each bind substrate. The interval 245–251 (GVGKPED) is RNA binding. D264 (nucleophile) is an active-site residue. The tract at residues 269–273 (TRNAR) is RNA binding; important for wobble base 34 recognition. Zn(2+) is bound by residues C302, C304, C307, and H333.

Belongs to the queuine tRNA-ribosyltransferase family. Homodimer. Within each dimer, one monomer is responsible for RNA recognition and catalysis, while the other monomer binds to the replacement base PreQ1. It depends on Zn(2+) as a cofactor.

It carries out the reaction 7-aminomethyl-7-carbaguanine + guanosine(34) in tRNA = 7-aminomethyl-7-carbaguanosine(34) in tRNA + guanine. The protein operates within tRNA modification; tRNA-queuosine biosynthesis. Functionally, catalyzes the base-exchange of a guanine (G) residue with the queuine precursor 7-aminomethyl-7-deazaguanine (PreQ1) at position 34 (anticodon wobble position) in tRNAs with GU(N) anticodons (tRNA-Asp, -Asn, -His and -Tyr). Catalysis occurs through a double-displacement mechanism. The nucleophile active site attacks the C1' of nucleotide 34 to detach the guanine base from the RNA, forming a covalent enzyme-RNA intermediate. The proton acceptor active site deprotonates the incoming PreQ1, allowing a nucleophilic attack on the C1' of the ribose to form the product. After dissociation, two additional enzymatic reactions on the tRNA convert PreQ1 to queuine (Q), resulting in the hypermodified nucleoside queuosine (7-(((4,5-cis-dihydroxy-2-cyclopenten-1-yl)amino)methyl)-7-deazaguanosine). This chain is Queuine tRNA-ribosyltransferase, found in Shewanella oneidensis (strain ATCC 700550 / JCM 31522 / CIP 106686 / LMG 19005 / NCIMB 14063 / MR-1).